The primary structure comprises 72 residues: ANFDPSCTGVYDRELLGRLSRLCDDCYNVFREPKVATECRSNCFYNPVFVQCLEYLIPADLHEEYQAHVQTV.

3 disulfides stabilise this stretch: cysteine 7–cysteine 43, cysteine 23–cysteine 39, and cysteine 26–cysteine 52. Valine 72 carries the post-translational modification Valine amide.

The protein resides in the secreted. In terms of biological role, hormone found in the sinus gland of isopods and decapods which controls the blood sugar level. Has a secretagogue action over the amylase released from the midgut gland. May act as a stress hormone and may be involved in the control of molting and reproduction. The protein is Crustacean hyperglycemic hormone of Penaeus schmitti (White shrimp).